We begin with the raw amino-acid sequence, 2103 residues long: Orsellinic acid synthase (2103 aa).

Residues 17–232 (DAVHDLNVRS…KRPELAHATI (216 aa)) are N-terminal acylcarrier protein transacylase domain (SAT). A Ketosynthase family 3 (KS3) domain is found at 348-782 (ADAIAVVGMS…GGNVSMLLQD (435 aa)). Catalysis depends on for beta-ketoacyl synthase activity residues C525, H660, and H702. The segment at 881 to 1197 (VFTFTGQGAQ…RRGGDDWQSV (317 aa)) is malonyl-CoA:ACP transacylase (MAT) domain. S973 serves as the catalytic For acyl/malonyl transferase activity. Residues 1272–1409 (HAVEKLQREE…GQPDSAVRRD (138 aa)) are N-terminal hotdog fold. Residues 1272–1582 (HAVEKLQREE…FKKLERDFFA (311 aa)) enclose the PKS/mFAS DH domain. The tract at residues 1303–1579 (GHVVDESAIC…DICFKKLERD (277 aa)) is product template (PT) domain. Catalysis depends on H1304, which acts as the Proton acceptor; for dehydratase activity. A C-terminal hotdog fold region spans residues 1433 to 1582 (VHAMDTALFY…FKKLERDFFA (150 aa)). Catalysis depends on D1493, which acts as the Proton donor; for dehydratase activity. Positions 1592 to 1638 (STKPVAAAPAKSMAKRARQLAPSPSPSSSSGSNTPMSRSPTPSSVSD) are disordered. 2 stretches are compositionally biased toward low complexity: residues 1594–1603 (KPVAAAPAKS) and 1617–1631 (PSSS…SRSP). 2 consecutive Carrier domains span residues 1640 to 1716 (VDLG…GGSA) and 1741 to 1815 (PAPS…DDDA). S1676 carries the O-(pantetheine 4'-phosphoryl)serine modification. The segment at 1722-1743 (EDITKPTPSPEQTQARKQGPAP) is disordered. S1775 is modified (O-(pantetheine 4'-phosphoryl)serine). Residues 1809-1838 (EALDDDAEEESAPAQTSTNPAKETTIDSSR) form a disordered region. Positions 1810 to 1819 (ALDDDAEEES) are enriched in acidic residues. Polar residues predominate over residues 1823-1836 (QTSTNPAKETTIDS). The tract at residues 1849–2082 (ASYIHLKALP…TVNGDHFSMM (234 aa)) is thioesterase (TE) domain.

The catalysed reaction is 3 malonyl-CoA + acetyl-CoA + 2 H(+) = orsellinate + 3 CO2 + 4 CoA. Its pathway is secondary metabolite biosynthesis. Its function is as follows. Non-reducing polyketide synthase; part of the gene cluster that mediates the biosynthesis of orsellinic acid, as well as of the cathepsin K inhibitors F9775 A and F9775 B. The non-reducing polyketide synthase orsA produces orsellinic acid by condensing acetyl-CoA with 3 malonyl-CoA units. Further modifications by the decarboxylase orsB and the tyrosinase-like protein orsC lead to the production of F9775 A and F9775 B. The functions of orsD and orsE remain unclear since only orsB and orsC are required to convert orsellinic acid into F9775 A and F9775 B. This Emericella nidulans (strain FGSC A4 / ATCC 38163 / CBS 112.46 / NRRL 194 / M139) (Aspergillus nidulans) protein is Orsellinic acid synthase.